A 195-amino-acid polypeptide reads, in one-letter code: Anticoagulant protein rhipilin-2 (195 aa).

An N-terminal signal peptide occupies residues M1–A20. The BPTI/Kunitz inhibitor domain maps to C26–C87. Cystine bridges form between C26/C87, C39/C70, and C62/C83.

As to expression, primarily expressed in salivary glands and weakly expressed in the midgut of fed ticks.

Its subcellular location is the secreted. Its function is as follows. Anticoagulant protein that inhibits the serine proteases trypsin and elastase, but not thrombin. The anticoagulant effect of this recombinant protein on blood clotting is found only in the activated partial thromboplastin time (APTT) assays, but not in the prothrombin time (PT) assays. In Rhipicephalus haemaphysaloides (Tick), this protein is Anticoagulant protein rhipilin-2.